The following is a 118-amino-acid chain: Ribosome-binding factor A (118 aa).

It belongs to the RbfA family. Monomer. Binds 30S ribosomal subunits, but not 50S ribosomal subunits or 70S ribosomes.

Its subcellular location is the cytoplasm. Its function is as follows. One of several proteins that assist in the late maturation steps of the functional core of the 30S ribosomal subunit. Associates with free 30S ribosomal subunits (but not with 30S subunits that are part of 70S ribosomes or polysomes). Required for efficient processing of 16S rRNA. May interact with the 5'-terminal helix region of 16S rRNA. The polypeptide is Ribosome-binding factor A (Bacillus cereus (strain AH820)).